The primary structure comprises 388 residues: MRYLTSGESHGPQLTVIVEGIPANLEIKVEDINKEMFKRQGGYGRGRRMQIEKDTVEIVSGVRNGYTLGSPITMVVTNDDFTHWRKIMGAAPISEEERENMKRTITKPRPGHADLVGGMKYNHRDLRNVLERSSARETAARVAVGALCKVLLQQLDIDIYSRVVEIGGIKDKDFYDSKTFKANLDRNDVRVIDDSIAQAMRDKIDEAKNDGDSIGGVVQVVVENMPVGVGSYVHYDRKLDGRIAQGVVSINAFKGVSFGEGFKAAEKPGSEIQDEILYNTELGYYRGSNHLGGLEGGMSNGMPIIVNGVMKPIPTLYKPLNSVDINTKEDFKATIERSDSCAVPAASIVCEHVVAFEIAKALLEEFQSNHIEQLKQQIIERRQLNIEF.

NADP(+) is bound by residues arginine 39 and arginine 45. FMN contacts are provided by residues 132-134 (RSS), 251-252 (NA), glycine 296, 311-315 (KPIPT), and arginine 337.

Belongs to the chorismate synthase family. As to quaternary structure, homotetramer. The cofactor is FMNH2.

It catalyses the reaction 5-O-(1-carboxyvinyl)-3-phosphoshikimate = chorismate + phosphate. Its pathway is metabolic intermediate biosynthesis; chorismate biosynthesis; chorismate from D-erythrose 4-phosphate and phosphoenolpyruvate: step 7/7. In terms of biological role, catalyzes the anti-1,4-elimination of the C-3 phosphate and the C-6 proR hydrogen from 5-enolpyruvylshikimate-3-phosphate (EPSP) to yield chorismate, which is the branch point compound that serves as the starting substrate for the three terminal pathways of aromatic amino acid biosynthesis. This reaction introduces a second double bond into the aromatic ring system. The polypeptide is Chorismate synthase (Staphylococcus aureus (strain MW2)).